A 469-amino-acid chain; its full sequence is MSPQTETKASVGFKAGVKDYKLTYYTPEYETLDTDILAAFRVSPQPGVPPEEAGAAVAAESSTGTWTTVWTDGLTSLDRYKGRCYHIEPVAGEENQYICYVAYPLDLFEEGSVTNMFTSIVGNVFGFKALRALRLEDLRIPVAYVKTFLGPPHGIQVERDKLNKYGRPLLGCTIKPKLGLSAKNYGRAVYECLRGGLDFTKDDENVNSQPFMRWRDRFLFCAEAINKAQAETGEIKGHYLNATAGTCEEMIKRAVFARELGVPIVMHDYLTGGFTANTSLAHYCRDNGLLLHIHRAMHAVIDRQKNHGMHFRVLAKALRLSGGDHIHAGTVVGKLEGEREITLGFVDLLRDDFTEKDRSRGIYFTQSWVSTPGVLPVASGGIHVWHMPALTEIFGDDSVLQFGGGTLGHPWGNAPGAVANRVALEACVQARNEGRDLAREGNTIIREACKWSPELAAACEVWKEIKFEF.

Positions 1 to 2 (MS) are excised as a propeptide. At P3 the chain carries N-acetylproline. An N6,N6,N6-trimethyllysine modification is found at K14. Residues N123 and T173 each contribute to the substrate site. K175 acts as the Proton acceptor in catalysis. K177 contributes to the substrate binding site. Mg(2+)-binding residues include K201, D203, and E204. Position 201 is an N6-carboxylysine (K201). Residue H294 is the Proton acceptor of the active site. R295, H327, and S379 together coordinate substrate.

The protein belongs to the RuBisCO large chain family. Type I subfamily. Heterohexadecamer of 8 large chains and 8 small chains; disulfide-linked. The disulfide link is formed within the large subunit homodimers. Mg(2+) serves as cofactor. The disulfide bond which can form in the large chain dimeric partners within the hexadecamer appears to be associated with oxidative stress and protein turnover.

Its subcellular location is the plastid. The protein resides in the chloroplast. The enzyme catalyses 2 (2R)-3-phosphoglycerate + 2 H(+) = D-ribulose 1,5-bisphosphate + CO2 + H2O. It catalyses the reaction D-ribulose 1,5-bisphosphate + O2 = 2-phosphoglycolate + (2R)-3-phosphoglycerate + 2 H(+). RuBisCO catalyzes two reactions: the carboxylation of D-ribulose 1,5-bisphosphate, the primary event in carbon dioxide fixation, as well as the oxidative fragmentation of the pentose substrate in the photorespiration process. Both reactions occur simultaneously and in competition at the same active site. This is Ribulose bisphosphate carboxylase large chain from Dianthus caryophyllus (Carnation).